A 314-amino-acid chain; its full sequence is MQTASFKNGTLKIGTRGSKLALAQAYLTRRLLQEAHGLPEDAIEILPMSTAGDRIQDRPLSEVGGKGLFTEEIEQALKDGRIDIAVHSTKDMPTALPEGLHLSVFLEREDPRDAFIGRSARRFMDLPQGATVGSSSLRRQALIRRLRPDIEVVMYRGNVDTRLRKLDAGEVDGTFLACAGLRRLGLADVITDVLDPSVFPPAPGQGAIGIESRIGDERIDVLLAPLAHRETQIALACERAFLGALDGSCRTPIAGLATVEGDRLSFRGMILTPDGRQAHEVTAEGVVSDAAALGTDAANRVRAMAGPHFFDGWQ.

Cys249 is modified (S-(dipyrrolylmethanemethyl)cysteine).

It belongs to the HMBS family. Monomer. Dipyrromethane is required as a cofactor.

It catalyses the reaction 4 porphobilinogen + H2O = hydroxymethylbilane + 4 NH4(+). The protein operates within porphyrin-containing compound metabolism; protoporphyrin-IX biosynthesis; coproporphyrinogen-III from 5-aminolevulinate: step 2/4. Functionally, tetrapolymerization of the monopyrrole PBG into the hydroxymethylbilane pre-uroporphyrinogen in several discrete steps. The sequence is that of Porphobilinogen deaminase from Brucella abortus (strain S19).